A 322-amino-acid polypeptide reads, in one-letter code: N-acetyl-gamma-glutamyl-phosphate reductase (322 aa).

Residue cysteine 132 is part of the active site.

It belongs to the NAGSA dehydrogenase family. Type 1 subfamily.

Its subcellular location is the cytoplasm. It catalyses the reaction N-acetyl-L-glutamate 5-semialdehyde + phosphate + NADP(+) = N-acetyl-L-glutamyl 5-phosphate + NADPH + H(+). It functions in the pathway amino-acid biosynthesis; L-arginine biosynthesis; N(2)-acetyl-L-ornithine from L-glutamate: step 3/4. Its function is as follows. Catalyzes the NADPH-dependent reduction of N-acetyl-5-glutamyl phosphate to yield N-acetyl-L-glutamate 5-semialdehyde. The protein is N-acetyl-gamma-glutamyl-phosphate reductase of Bacteroides thetaiotaomicron (strain ATCC 29148 / DSM 2079 / JCM 5827 / CCUG 10774 / NCTC 10582 / VPI-5482 / E50).